The sequence spans 289 residues: Thiazole synthase (289 aa).

K132 acts as the Schiff-base intermediate with DXP in catalysis. Residues G193, 219-220, and 241-242 contribute to the 1-deoxy-D-xylulose 5-phosphate site; these read AG and NT.

It belongs to the ThiG family. As to quaternary structure, homotetramer. Forms heterodimers with either ThiH or ThiS.

It is found in the cytoplasm. The enzyme catalyses [ThiS sulfur-carrier protein]-C-terminal-Gly-aminoethanethioate + 2-iminoacetate + 1-deoxy-D-xylulose 5-phosphate = [ThiS sulfur-carrier protein]-C-terminal Gly-Gly + 2-[(2R,5Z)-2-carboxy-4-methylthiazol-5(2H)-ylidene]ethyl phosphate + 2 H2O + H(+). The protein operates within cofactor biosynthesis; thiamine diphosphate biosynthesis. Functionally, catalyzes the rearrangement of 1-deoxy-D-xylulose 5-phosphate (DXP) to produce the thiazole phosphate moiety of thiamine. Sulfur is provided by the thiocarboxylate moiety of the carrier protein ThiS. In vitro, sulfur can be provided by H(2)S. In Rhodospirillum rubrum (strain ATCC 11170 / ATH 1.1.1 / DSM 467 / LMG 4362 / NCIMB 8255 / S1), this protein is Thiazole synthase.